A 214-amino-acid polypeptide reads, in one-letter code: Cytochrome b (214 aa).

4 helical membrane-spanning segments follow: residues 31–51 (FGSM…FLAI), 75–96 (WIMQ…YTHI), 111–131 (WLSG…GYVL), and 176–196 (FFAL…IHII). Heme b contacts are provided by His81 and His95. Heme b is bound by residues His180 and His194. His199 contributes to the a ubiquinone binding site.

Belongs to the cytochrome b family. As to quaternary structure, the cytochrome bc1 complex contains 3 respiratory subunits (MT-CYB, CYC1 and UQCRFS1), 2 core proteins (UQCRC1 and UQCRC2) and probably 6 low-molecular weight proteins. It depends on heme b as a cofactor.

It localises to the mitochondrion inner membrane. Component of the ubiquinol-cytochrome c reductase complex (complex III or cytochrome b-c1 complex) that is part of the mitochondrial respiratory chain. The b-c1 complex mediates electron transfer from ubiquinol to cytochrome c. Contributes to the generation of a proton gradient across the mitochondrial membrane that is then used for ATP synthesis. The protein is Cytochrome b (MT-CYB) of Cerastes cerastes (Horned desert viper).